A 237-amino-acid chain; its full sequence is MKLILTLLVSGLCALAAPAAKRDGVEDYAIGIDKRNSVEDYAIGIDKRNSVEDYAIGIDKRNSVEDYAIGIDKRNSVEDYAIGIDKRNTVEDYAIGIDKRNSVEDYAIGIDKRNTVEDYAIGIDKRNSVEDYAIGIDKRNSVEDYAIGIDKRGGSVEDYAIGIDKRNSVEDYAIGIDKRNSVEDYAIGIDKRGSVEDYAIGIDKKRGTVEDYAIGIDKRGGSVEDYAIGIDKRHGGH.

Positions 1 to 19 are cleaved as a signal peptide; it reads MKLILTLLVSGLCALAAPA. 2 propeptides span residues 20-22 and 234-237; these read AKR and HGGH.

Post-translationally, ustA is processed by the subtilisin-like endoprotease kex2 that is outside the ustiloxin B gene cluster, at the C-terminal side of Arg-Lys, after transfer to Golgi apparatus through the endoplasmic reticulum (ER). Cleavage by kex2 generates 16 peptides YAIG-I to YAIG-XVI. To process the precursor peptide further, at least two peptidases are necessary to cleave the N-terminal and C-terminal sides of the Tyr-Ala-Ile-Gly core peptide which serves as backbone for the synthesis of ustiloxin B, through cyclization and modification of the tyrosine. One of the two peptidases must be the serine peptidase ustP; and the other pepdidase is probably ustH. Macrocyclization of the core peptide derived from ustA requires the tyrosinase ustQ, as well as the homologous oxidases ustYa and ustYb, and leads to the production of the first cyclization product N-desmethylustiloxin F. For the formation of N-desmethylustiloxin F, three oxidation steps are required, hydroxylation at the benzylic position, hydroxylation at either the aromatic ring of Tyr or beta-position of Ile, and oxidative cyclization. UstQ may catalyze the oxidation of a phenol moiety, whereas the ustYa and ustYb are most likely responsible for the remaining two-step oxidations. N-desmethylustiloxin F is then methylated by ustM to yield ustiloxin F which in turn substrate of the cytochrome P450 monooxygenase ustC which catalyzes the formation of S-deoxyustiloxin H. The flavoprotein monooxygenases ustF1 and ustF2 then participate in the modification of the side chain of S-deoxyustiloxin H, leading to the synthesis of an oxime intermediate, via ustiloxin H. Finally, carboxylative dehydration performed by the cysteine desulfurase-like protein ustD yields ustiloxin B.

Its pathway is mycotoxin biosynthesis. Its function is as follows. Ribosomally synthesized cyclic peptide ustiloxin B precursor: Part of the gene cluster that mediates the biosynthesis of the secondary metabolite ustiloxin B, an antimitotic tetrapeptide. The ustA translated product contains a 16-fold repeated peptide embedding the tetrapeptide Tyr-Ala-Ile-Gly, that is converted into the cyclic moiety of ustiloxin B. In Aspergillus flavus (strain ATCC 200026 / FGSC A1120 / IAM 13836 / NRRL 3357 / JCM 12722 / SRRC 167), this protein is Ribosomally synthesized cyclic peptide ustiloxin B precursosr.